We begin with the raw amino-acid sequence, 206 residues long: uncharacterized protein (206 aa).

A helical membrane pass occupies residues 21 to 43; sequence VPINITMSICALTALLKSYSITG.

It is found in the membrane. This is an uncharacterized protein from Acanthamoeba polyphaga (Amoeba).